The following is a 100-amino-acid chain: Large ribosomal subunit protein uL23 (100 aa).

This sequence belongs to the universal ribosomal protein uL23 family. In terms of assembly, part of the 50S ribosomal subunit. Contacts protein L29, and trigger factor when it is bound to the ribosome.

Functionally, one of the early assembly proteins it binds 23S rRNA. One of the proteins that surrounds the polypeptide exit tunnel on the outside of the ribosome. Forms the main docking site for trigger factor binding to the ribosome. The polypeptide is Large ribosomal subunit protein uL23 (Baumannia cicadellinicola subsp. Homalodisca coagulata).